The chain runs to 392 residues: Elongation factor Tu 2 (392 aa).

Residues 10-201 (KPHVNIGTIG…AVDSYIPTPE (192 aa)) form the tr-type G domain. Residues 19–26 (GHVDHGKT) form a G1 region. GTP is bound at residue 19-26 (GHVDHGKT). Position 26 (Thr26) interacts with Mg(2+). Residues 55 to 59 (GITIS) are G2. Residues 76-79 (DCPG) form a G3 region. GTP is bound by residues 76 to 80 (DCPGH) and 131 to 134 (NKVD). A G4 region spans residues 131 to 134 (NKVD). Positions 169–171 (SAL) are G5.

Belongs to the TRAFAC class translation factor GTPase superfamily. Classic translation factor GTPase family. EF-Tu/EF-1A subfamily. In terms of assembly, monomer.

The protein localises to the cytoplasm. The catalysed reaction is GTP + H2O = GDP + phosphate + H(+). GTP hydrolase that promotes the GTP-dependent binding of aminoacyl-tRNA to the A-site of ribosomes during protein biosynthesis. The protein is Elongation factor Tu 2 of Rhizobium etli (strain ATCC 51251 / DSM 11541 / JCM 21823 / NBRC 15573 / CFN 42).